The chain runs to 379 residues: Peritrophin-48 (379 aa).

A signal peptide spans 1–20 (MKAKTLTATLALILLAFAQA). 2 consecutive Chitin-binding type-2 domains span residues 25-83 (ASYC…NCFF) and 86-143 (ANPC…NTGN). 2 cysteine pairs are disulfide-bonded: Cys60–Cys73 and Cys120–Cys133. N-linked (GlcNAc...) asparagine glycans are attached at residues Asn150 and Asn168. 3 Chitin-binding type-2 domains span residues 151 to 208 (LSVC…ACSR), 224 to 283 (TSPC…RTLK), and 285 to 356 (CNRC…ACEN). A disulfide bridge connects residues Cys185 and Cys198. 2 N-linked (GlcNAc...) asparagine glycosylation sites follow: Asn247 and Asn252. A disulfide bond links Cys324 and Cys337. Residues Asn341, Asn356, and Asn373 are each glycosylated (N-linked (GlcNAc...) asparagine).

In terms of processing, glycosylated. As to expression, larval peritrophic membrane.

Its function is as follows. Binds chitin and may bind related oligosaccharide structures. The chain is Peritrophin-48 from Chrysomya bezziana (Old world screw-worm fly).